Here is a 373-residue protein sequence, read N- to C-terminus: Cell surface Cu-only superoxide dismutase ARB_03674 (373 aa).

An N-terminal signal peptide occupies residues 1 to 55 (MIWKQPPRRMGEMGGSLSRRFGNAAASWAVWRVSRSCFSLLFFFYFFLFFSSSSL). N-linked (GlcNAc...) asparagine glycosylation is found at asparagine 75 and asparagine 141. Residues histidine 194, histidine 196, and histidine 212 each coordinate Cu cation. Cysteine 206 and cysteine 289 are joined by a disulfide. Asparagine 254 and asparagine 274 each carry an N-linked (GlcNAc...) asparagine glycan. Position 280 (histidine 280) interacts with Cu cation. N-linked (GlcNAc...) asparagine glycosylation is found at asparagine 283 and asparagine 291. The interval 329 to 348 (GHAPTISATYTPTPTPSPPA) is disordered. A compositionally biased stretch (low complexity) spans 331–340 (APTISATYTP). Residue glycine 352 is the site of GPI-anchor amidated glycine attachment. A propeptide spans 353–373 (AGRLVGFSLGAIMAALVPLAL) (removed in mature form).

This sequence belongs to the Cu-Zn superoxide dismutase family. In terms of assembly, monomer. Cu cation serves as cofactor. Post-translationally, the GPI-anchor is attached to the protein in the endoplasmic reticulum and serves to target the protein to the cell surface. There, the glucosamine-inositol phospholipid moiety is cleaved off and the GPI-modified mannoprotein is covalently attached via its lipidless GPI glycan remnant to the 1,6-beta-glucan of the outer cell wall layer.

It localises to the secreted. It is found in the cell wall. Its subcellular location is the cell membrane. It carries out the reaction 2 superoxide + 2 H(+) = H2O2 + O2. Functionally, superoxide dismutases serve to convert damaging superoxide radicals, a key form of ROS, to less damaging hydrogen peroxide that can be converted into water by catalase action. Degrades host-derived reactive oxygen species to escape innate immune surveillance. Involved in the occurrence of miconazole-tolerant persisters in biofilms. Persisters are cells that survive high doses of an antimicrobial agent. The unusual attributes of SOD5-like fungal proteins, including the absence of zinc and an open active site that readily captures extracellular copper, make these SODs well suited to meet challenges in zinc and copper availability at the host-pathogen interface. The chain is Cell surface Cu-only superoxide dismutase ARB_03674 from Arthroderma benhamiae (strain ATCC MYA-4681 / CBS 112371) (Trichophyton mentagrophytes).